Consider the following 313-residue polypeptide: D-alanine--D-alanine ligase (313 aa).

In terms of domain architecture, ATP-grasp spans 108–308 (KLVWQQLGIP…YQELVVGVLA (201 aa)). 138 to 193 (VAKLGLPLFVKPASEGSSVAVIKVKSADALPAALIEAVKYDKIVVVEKSVEGGGEY) is a binding site for ATP. Mg(2+)-binding residues include Asp262, Glu275, and Asn277.

The protein belongs to the D-alanine--D-alanine ligase family. Mg(2+) serves as cofactor. Requires Mn(2+) as cofactor.

The protein resides in the cytoplasm. It carries out the reaction 2 D-alanine + ATP = D-alanyl-D-alanine + ADP + phosphate + H(+). It participates in cell wall biogenesis; peptidoglycan biosynthesis. Its function is as follows. Cell wall formation. The sequence is that of D-alanine--D-alanine ligase from Paraburkholderia phytofirmans (strain DSM 17436 / LMG 22146 / PsJN) (Burkholderia phytofirmans).